A 488-amino-acid chain; its full sequence is Probable indole-3-acetic acid-amido synthetase GH3.6 (488 aa).

The protein belongs to the IAA-amido conjugating enzyme family. As to expression, expressed in roots and callus.

Its function is as follows. May catalyze the synthesis of indole-3-acetic acid (IAA)-amino acid conjugates, providing a mechanism for the plant to cope with the presence of excess auxin. This Oryza sativa subsp. japonica (Rice) protein is Probable indole-3-acetic acid-amido synthetase GH3.6 (GH3.6).